Here is a 285-residue protein sequence, read N- to C-terminus: Protoheme IX farnesyltransferase (285 aa).

The next 9 helical transmembrane spans lie at 13–33 (LGKL…AFLA), 40–60 (LLPI…AMII), 89–109 (EAII…FIDN), 110–130 (ILTA…YTIL), 137–157 (LNIV…YTSL), 165–185 (GFLL…SLAL), 194–214 (AHYP…AIAI), 218–238 (LMIP…LIAF), and 265–285 (FIFS…VKLI).

The protein belongs to the UbiA prenyltransferase family. Protoheme IX farnesyltransferase subfamily.

It localises to the cell membrane. The catalysed reaction is heme b + (2E,6E)-farnesyl diphosphate + H2O = Fe(II)-heme o + diphosphate. The protein operates within porphyrin-containing compound metabolism; heme O biosynthesis; heme O from protoheme: step 1/1. In terms of biological role, converts heme B (protoheme IX) to heme O by substitution of the vinyl group on carbon 2 of heme B porphyrin ring with a hydroxyethyl farnesyl side group. The protein is Protoheme IX farnesyltransferase of Saccharolobus islandicus (strain Y.G.57.14 / Yellowstone #1) (Sulfolobus islandicus).